The primary structure comprises 488 residues: Probable glycine dehydrogenase (decarboxylating) subunit 2 (488 aa).

An N6-(pyridoxal phosphate)lysine modification is found at Lys-273.

Belongs to the GcvP family. C-terminal subunit subfamily. The glycine cleavage system is composed of four proteins: P, T, L and H. In this organism, the P 'protein' is a heterodimer of two subunits. The cofactor is pyridoxal 5'-phosphate.

The enzyme catalyses N(6)-[(R)-lipoyl]-L-lysyl-[glycine-cleavage complex H protein] + glycine + H(+) = N(6)-[(R)-S(8)-aminomethyldihydrolipoyl]-L-lysyl-[glycine-cleavage complex H protein] + CO2. Functionally, the glycine cleavage system catalyzes the degradation of glycine. The P protein binds the alpha-amino group of glycine through its pyridoxal phosphate cofactor; CO(2) is released and the remaining methylamine moiety is then transferred to the lipoamide cofactor of the H protein. In Halalkalibacterium halodurans (strain ATCC BAA-125 / DSM 18197 / FERM 7344 / JCM 9153 / C-125) (Bacillus halodurans), this protein is Probable glycine dehydrogenase (decarboxylating) subunit 2.